Here is a 307-residue protein sequence, read N- to C-terminus: Elongation factor Ts (307 aa).

Residues 80–83 form an involved in Mg(2+) ion dislocation from EF-Tu region; the sequence is TDFV.

The protein belongs to the EF-Ts family.

It is found in the cytoplasm. Its function is as follows. Associates with the EF-Tu.GDP complex and induces the exchange of GDP to GTP. It remains bound to the aminoacyl-tRNA.EF-Tu.GTP complex up to the GTP hydrolysis stage on the ribosome. The protein is Elongation factor Ts of Clostridium botulinum (strain 657 / Type Ba4).